The sequence spans 463 residues: MSVSTLESENAQPVAQTQNSELIYRLEDRPPLPQTLFAACQHLLAMFVAVITPALLICQALGLPAQDTQHIISMSLFASGVASIIQIKAWGPVGSGLLSIQGTSFNFVAPLIMGGTALKTGGADVPTMMAALFGTLMLASCTEMVISRVLHLARRIITPLVSGVVVMIIGLSLIQVGLTSIGGGYAAMSDNTFGAPKNLLLAGVVLALIILLNRQRNPYLRVASLVIAMAAGYALAWFMGMLPESNEPMTQELIMVPTPLYYGLGIEWSLLLPLMLVFMITSLETIGDITATSDVSEQPVSGPLYMKRLKGGVLANGLNSFVSAVFNTFPNSCFGQNNGVIQLTGVASRYVGFVVALMLIVLGLFPAVSGFVQHIPEPVLGGATLVMFGTIAASGVRIVSREPLNRRAILIIALSLAVGLGVSQQPLILQFAPEWLKNLLSSGIAAGGITAIVLNLIFPPEKQ.

12 helical membrane passes run 43-63, 71-91, 93-113, 126-146, 156-176, 192-212, 222-242, 260-280, 352-372, 379-399, 409-429, and 439-459; these read LLAM…ALGL, IISM…KAWG, VGSG…PLIM, PTMM…EMVI, IITP…LIQV, TFGA…IILL, VASL…MGML, LYYG…VFMI, GFVV…SGFV, VLGG…VRIV, ILII…PLIL, and LLSS…LIFP.

The protein belongs to the nucleobase:cation symporter-2 (NCS2) (TC 2.A.40) family.

The protein localises to the cell inner membrane. It carries out the reaction xanthine(in) + H(+)(in) = xanthine(out) + H(+)(out). Its function is as follows. Specific, proton motive force-dependent high-affinity transporter for xanthine. The chain is Xanthine permease XanP (xanP) from Escherichia coli O6:H1 (strain CFT073 / ATCC 700928 / UPEC).